Here is a 253-residue protein sequence, read N- to C-terminus: 3-dehydroquinate dehydratase (253 aa).

Residues 46 to 48 (EWR) and R82 each bind 3-dehydroquinate. The active-site Proton donor/acceptor is the H143. The Schiff-base intermediate with substrate role is filled by K170. 3-dehydroquinate contacts are provided by R213, S232, and Q236.

Belongs to the type-I 3-dehydroquinase family. In terms of assembly, homodimer.

It carries out the reaction 3-dehydroquinate = 3-dehydroshikimate + H2O. The protein operates within metabolic intermediate biosynthesis; chorismate biosynthesis; chorismate from D-erythrose 4-phosphate and phosphoenolpyruvate: step 3/7. Involved in the third step of the chorismate pathway, which leads to the biosynthesis of aromatic amino acids. Catalyzes the cis-dehydration of 3-dehydroquinate (DHQ) and introduces the first double bond of the aromatic ring to yield 3-dehydroshikimate. In Syntrophotalea carbinolica (strain DSM 2380 / NBRC 103641 / GraBd1) (Pelobacter carbinolicus), this protein is 3-dehydroquinate dehydratase.